Here is a 187-residue protein sequence, read N- to C-terminus: Elongation factor P (187 aa).

Lysine 34 bears the N6-(3,6-diaminohexanoyl)-5-hydroxylysine mark.

This sequence belongs to the elongation factor P family. Post-translationally, may be beta-lysylated on the epsilon-amino group of Lys-34 by the combined action of EpmA and EpmB, and then hydroxylated on the C5 position of the same residue by EpmC (if this protein is present). Lysylation is critical for the stimulatory effect of EF-P on peptide-bond formation. The lysylation moiety may extend toward the peptidyltransferase center and stabilize the terminal 3-CCA end of the tRNA. Hydroxylation of the C5 position on Lys-34 may allow additional potential stabilizing hydrogen-bond interactions with the P-tRNA.

The protein resides in the cytoplasm. The protein operates within protein biosynthesis; polypeptide chain elongation. Involved in peptide bond synthesis. Alleviates ribosome stalling that occurs when 3 or more consecutive Pro residues or the sequence PPG is present in a protein, possibly by augmenting the peptidyl transferase activity of the ribosome. Modification of Lys-34 is required for alleviation. This Buchnera aphidicola subsp. Schizaphis graminum (strain Sg) protein is Elongation factor P.